A 567-amino-acid chain; its full sequence is Geranylgeranyl transferase type-2 subunit alpha (567 aa).

PFTA repeat units lie at residues 44-78, 88-122, 124-158, 159-193, 207-241, and 363-397; these read LDES…QLET, LVKA…RLPE, NWTR…QAAV, PPAE…QLHP, VLLK…RADP, and VLQS…ALDP. Serine 98 carries the post-translational modification Phosphoserine. LRR repeat units lie at residues 442-463, 464-486, 487-508, 509-530, and 534-555; these read EVRV…EQLL, LVTH…AALR, CLEV…TNLP, RLQE…QPLA, and RLVL…LEQL.

The protein belongs to the protein prenyltransferase subunit alpha family. In terms of assembly, heterotrimer composed of RABGGTA, RABGGTB and CHM; within this trimer, RABGGTA and RABGGTB form the catalytic component B, while CHM (component A) mediates peptide substrate binding. The Rab GGTase dimer (RGGT) interacts with CHM (component A) prior to Rab protein binding; the association is stabilized by geranylgeranyl pyrophosphate (GGpp). The CHM:RGGT:Rab complex is destabilized by GGpp. Interacts with non-phosphorylated form of RAB8A; phosphorylation of RAB8A at 'Thr-72' disrupts this interaction.

The catalysed reaction is geranylgeranyl diphosphate + L-cysteinyl-[protein] = S-geranylgeranyl-L-cysteinyl-[protein] + diphosphate. The enzymatic reaction requires the aid of a Rab escort protein (also called component A), such as CHM. Functionally, catalyzes the transfer of a geranylgeranyl moiety from geranylgeranyl diphosphate to both cysteines of Rab proteins with the C-terminal sequence -XXCC, -XCXC and -CCXX, such as RAB1A, RAB3A, RAB5A and RAB7A. In Homo sapiens (Human), this protein is Geranylgeranyl transferase type-2 subunit alpha (RABGGTA).